Reading from the N-terminus, the 864-residue chain is Dynamin-1 (864 aa).

One can recognise a Dynamin-type G domain in the interval 28–294; the sequence is DLDLPQIAVV…LTNHIRDTLP (267 aa). The tract at residues 38-45 is G1 motif; sequence GGQSAGKS. GDP is bound by residues serine 41, glycine 43, lysine 44, serine 45, serine 46, arginine 59, and glycine 60. The interval 64 to 66 is G2 motif; that stretch reads VTR. Phosphotyrosine is present on tyrosine 80. Tyrosine 125 is modified (3'-nitrotyrosine; alternate). Tyrosine 125 is subject to Phosphotyrosine; alternate. The interval 136–139 is G3 motif; it reads DLPG. Residues 205 to 208 form a G4 motif region; that stretch reads TKLD. Lysine 206, aspartate 208, aspartate 211, asparagine 236, arginine 237, and glutamine 239 together coordinate GDP. The tract at residues 235–238 is G5 motif; the sequence is VNRS. 2 positions are modified to phosphoserine: serine 306 and serine 347. Tyrosine 354 carries the post-translational modification Phosphotyrosine. At serine 512 the chain carries Phosphoserine. The PH domain occupies 519–625; that stretch reads LVIRKGWLTI…WKASFLRAGV (107 aa). Residues 659–750 form the GED domain; sequence VETIRNLVDS…IIGDINTTTV (92 aa). The disordered stretch occupies residues 767-864; the sequence is SVPAGRRSPT…PESPRPPFDL (98 aa). Serine 774 is modified (phosphoserine; by CDK5). Phosphoserine is present on serine 778. Position 796 is an omega-N-methylarginine (arginine 796). Serine 822 is subject to Phosphoserine. Residues 825–843 are compositionally biased toward pro residues; it reads PFGPPPQVPSRPNRAPPGV. Phosphoserine is present on residues serine 851 and serine 857.

The protein belongs to the TRAFAC class dynamin-like GTPase superfamily. Dynamin/Fzo/YdjA family. In terms of assembly, homodimer; homodimerization is mediated by the dynamin-type G domain which promotes assembly-stimulated GTPase activity. Homo-tetramer formed from two dimers in the absence of lipid. Oligomerizes into a helical polymer that self-assembles around the vesicle membrane, when associated to the menbrane through lipid binding. Interacts (via C-terminal proline-rich domain (PRD)) with SNX9 (via SH3 domain); this interaction allows regulation of DNM1 self-assembly during late stages of endocytic vesicle formation and supports DNM1's early functions in accelerating clathrin-coated pits (CCPs) maturation in non neuronals cell. Interacts (via C-terminal proline-rich domain (PRD)) with MYO1E (via SH3 domain); this interaction regulates receptor-mediated endocytosis. Interacts with SNX33 (via SH3 domain); this interaction decreases DNM1-dependent endocytosis. Interacts with DIAPH1. Interacts with GRB2 (via SH3 domain); this interaction mediates disassembly of DNM1 polymers, therefore modulates self-assembly. Forms a complex with BIN1 (via SH3 domain) and SH3GL2 (via SH3 domain). Forms a complex with SH3GL2 (via SH3 domain) and AMPH (via SH3 domain). Forms a complex with SH3GL2 (via SH3 domain) and SYNJ1. Interacts with AMPH. Interacts (via C-terminal proline-rich domain (PRD)) with SYT1; this interaction facilitates vesicle fission during clathrin-mediated endocytosis (CME). Interacts (via C-terminal proline-rich domain (PRD)) with PLCG1 (via SH3 domain); this interaction stimulates the release of GDP from DNM1 and enhances DNM1-dependent endocytosis. Interacts with SNPH; this interaction inhibits the binding of DNM1 to AMPH and DNM1-receptor-mediated endocytosis. Interacts with CAV1. Interacts with SH3GLB1 (via SH3 domain). Interacts with PACSIN1 (via SH3 domain), PACSIN2 (via SH3 domain) and PACSIN3 (via SH3 domain). Interacts with UNC119; this interaction decreases DNM1's GTPase activity and affects DNM1's interaction with AMPH. Interacts (GTP-bound form) with DNAJC6; this interaction allows clathrin-coated vesicle (CCV) formation at the plasma membrane. Phosphorylation at Ser-774 by GSK3B/GSK3-beta leads to inactivation of receptor-mediated endocytosis in non-neuronal cells. Dephosphorylation at Ser-774, through the EGFR downstream signaling, leads to activation and regulates early stages of clathrin-mediated endocytosis (CME). Phosphorylated by CDK5 leading to synaptic vesicle endocytosis (SVE) activation. As to expression, brain-specific (peripheral sensory neurons).

It is found in the cytoplasmic vesicle. Its subcellular location is the clathrin-coated vesicle. The protein localises to the golgi apparatus. It localises to the cell membrane. The protein resides in the membrane. It is found in the clathrin-coated pit. Its subcellular location is the presynapse. The protein localises to the secretory vesicle. It localises to the chromaffin granule. The catalysed reaction is GTP + H2O = GDP + phosphate + H(+). Its function is as follows. Catalyzes the hydrolysis of GTP and utilizes this energy to mediate vesicle scission and participates in many forms of endocytosis, such as clathrin-mediated endocytosis or synaptic vesicle endocytosis as well as rapid endocytosis (RE). Associates to the membrane, through lipid binding, and self-assembles into rings and stacks of interconnected rings through oligomerization to form a helical polymer around the vesicle membrane leading to constriction of invaginated coated pits around their necks. Self-assembly of the helical polymer induces membrane tubules narrowing until the polymer reaches a length sufficient to trigger GTP hydrolysis. Depending on the curvature imposed on the tubules, membrane detachment from the helical polymer upon GTP hydrolysis can cause spontaneous hemifission followed by complete fission. May play a role in regulating early stages of clathrin-mediated endocytosis in non-neuronal cells through its activation by dephosphorylation via the signaling downstream of EGFR. Controls vesicle size at a step before fission, during formation of membrane pits, at hippocampal synapses. Controls plastic adaptation of the synaptic vesicle recycling machinery to high levels of activity. Mediates rapid endocytosis (RE), a Ca(2+)-dependent and clathrin- and K(+)-independent process in chromaffin cells. Microtubule-associated force-producing protein involved in producing microtubule bundles and able to bind and hydrolyze GTP. Through its interaction with DNAJC6, acts during the early steps of clathrin-coated vesicle (CCV) formation. This Rattus norvegicus (Rat) protein is Dynamin-1 (Dnm1).